The following is a 50-amino-acid chain: U23-theraphotoxin-Cg1a 2 (50 aa).

3 cysteine pairs are disulfide-bonded: Cys22/Cys36, Cys29/Cys41, and Cys35/Cys47.

This sequence belongs to the neurotoxin 10 (Hwtx-1) family. 64 (Jztx-20) subfamily. In terms of tissue distribution, expressed by the venom gland.

The protein localises to the secreted. Functionally, probable ion channel inhibitor. The protein is U23-theraphotoxin-Cg1a 2 of Chilobrachys guangxiensis (Chinese earth tiger tarantula).